The chain runs to 425 residues: Serine hydroxymethyltransferase 2 (425 aa).

Residues leucine 121 and 125 to 127 (GHL) each bind (6S)-5,6,7,8-tetrahydrofolate. Lysine 230 bears the N6-(pyridoxal phosphate)lysine mark.

The protein belongs to the SHMT family. As to quaternary structure, homodimer. Requires pyridoxal 5'-phosphate as cofactor.

It localises to the cytoplasm. The catalysed reaction is (6R)-5,10-methylene-5,6,7,8-tetrahydrofolate + glycine + H2O = (6S)-5,6,7,8-tetrahydrofolate + L-serine. The protein operates within one-carbon metabolism; tetrahydrofolate interconversion. It participates in amino-acid biosynthesis; glycine biosynthesis; glycine from L-serine: step 1/1. In terms of biological role, catalyzes the reversible interconversion of serine and glycine with tetrahydrofolate (THF) serving as the one-carbon carrier. This reaction serves as the major source of one-carbon groups required for the biosynthesis of purines, thymidylate, methionine, and other important biomolecules. Also exhibits THF-independent aldolase activity toward beta-hydroxyamino acids, producing glycine and aldehydes, via a retro-aldol mechanism. The polypeptide is Serine hydroxymethyltransferase 2 (Mycobacterium bovis (strain ATCC BAA-935 / AF2122/97)).